The primary structure comprises 303 residues: Ornithine carbamoyltransferase (303 aa).

Carbamoyl phosphate contacts are provided by residues 52 to 55, Gln-79, Arg-103, and 130 to 133; these read STRT and HPCQ. Residues Asn-161, Asp-222, and 226 to 227 each bind L-ornithine; that span reads SM. Carbamoyl phosphate is bound by residues 262–263 and Arg-290; that span reads CL.

Belongs to the aspartate/ornithine carbamoyltransferase superfamily. OTCase family.

The protein localises to the cytoplasm. The catalysed reaction is carbamoyl phosphate + L-ornithine = L-citrulline + phosphate + H(+). It participates in amino-acid biosynthesis; L-arginine biosynthesis; L-arginine from L-ornithine and carbamoyl phosphate: step 1/3. In terms of biological role, reversibly catalyzes the transfer of the carbamoyl group from carbamoyl phosphate (CP) to the N(epsilon) atom of ornithine (ORN) to produce L-citrulline. This chain is Ornithine carbamoyltransferase, found in Geobacter sulfurreducens (strain ATCC 51573 / DSM 12127 / PCA).